We begin with the raw amino-acid sequence, 389 residues long: Succinate--CoA ligase [ADP-forming] subunit beta (389 aa).

One can recognise an ATP-grasp domain in the interval 9–236 (RDMFEAHGVP…KDAADPLEAK (228 aa)). Residues Lys-45, 52 to 54 (GRG), Ala-94, and Glu-99 contribute to the ATP site. Mg(2+)-binding residues include Asn-191 and Asp-205. Substrate contacts are provided by residues Asn-256 and 318–320 (GIT).

It belongs to the succinate/malate CoA ligase beta subunit family. In terms of assembly, heterotetramer of two alpha and two beta subunits. The cofactor is Mg(2+).

It catalyses the reaction succinate + ATP + CoA = succinyl-CoA + ADP + phosphate. The catalysed reaction is GTP + succinate + CoA = succinyl-CoA + GDP + phosphate. It participates in carbohydrate metabolism; tricarboxylic acid cycle; succinate from succinyl-CoA (ligase route): step 1/1. Functionally, succinyl-CoA synthetase functions in the citric acid cycle (TCA), coupling the hydrolysis of succinyl-CoA to the synthesis of either ATP or GTP and thus represents the only step of substrate-level phosphorylation in the TCA. The beta subunit provides nucleotide specificity of the enzyme and binds the substrate succinate, while the binding sites for coenzyme A and phosphate are found in the alpha subunit. This Pseudarthrobacter chlorophenolicus (strain ATCC 700700 / DSM 12829 / CIP 107037 / JCM 12360 / KCTC 9906 / NCIMB 13794 / A6) (Arthrobacter chlorophenolicus) protein is Succinate--CoA ligase [ADP-forming] subunit beta.